The primary structure comprises 225 residues: Enolase-phosphatase E1 (225 aa).

This sequence belongs to the HAD-like hydrolase superfamily. MasA/MtnC family. In terms of assembly, monomer. Mg(2+) is required as a cofactor.

It carries out the reaction 5-methylsulfanyl-2,3-dioxopentyl phosphate + H2O = 1,2-dihydroxy-5-(methylsulfanyl)pent-1-en-3-one + phosphate. Its pathway is amino-acid biosynthesis; L-methionine biosynthesis via salvage pathway; L-methionine from S-methyl-5-thio-alpha-D-ribose 1-phosphate: step 3/6. The protein operates within amino-acid biosynthesis; L-methionine biosynthesis via salvage pathway; L-methionine from S-methyl-5-thio-alpha-D-ribose 1-phosphate: step 4/6. Bifunctional enzyme that catalyzes the enolization of 2,3-diketo-5-methylthiopentyl-1-phosphate (DK-MTP-1-P) into the intermediate 2-hydroxy-3-keto-5-methylthiopentenyl-1-phosphate (HK-MTPenyl-1-P), which is then dephosphorylated to form the acireductone 1,2-dihydroxy-3-keto-5-methylthiopentene (DHK-MTPene). This Shewanella denitrificans (strain OS217 / ATCC BAA-1090 / DSM 15013) protein is Enolase-phosphatase E1.